Reading from the N-terminus, the 810-residue chain is Sister chromatid cohesion 1 protein 2 (810 aa).

Disordered regions lie at residues 200-244, 273-315, and 606-626; these read RDTT…LLEP, SHES…SECG, and MGASSTTSGTAHQTENAAETP. 2 stretches are compositionally biased toward basic and acidic residues: residues 220–234 and 273–310; these read EPSRDHQNASRHRED and SHESSGDNLHRDGHTENLESEKTSKKTSCEEMQHDRSL. Positions 606-622 are enriched in polar residues; it reads MGASSTTSGTAHQTENA.

Belongs to the rad21 family. Component of the cohesin complex. In terms of tissue distribution, low expression in shoots, buds, siliques, leaves and roots. Found in, but not limited to, actively dividing cells: in procambium, protoderm and ground meristem in roots, and in shoot and floral meristems.

Its subcellular location is the nucleus. Functionally, may be involved in sister chromatid cohesion during mitosis. The chain is Sister chromatid cohesion 1 protein 2 (SYN2) from Arabidopsis thaliana (Mouse-ear cress).